A 158-amino-acid chain; its full sequence is Arginine repressor (158 aa).

It belongs to the ArgR family.

The protein resides in the cytoplasm. It participates in amino-acid biosynthesis; L-arginine biosynthesis [regulation]. In terms of biological role, regulates arginine biosynthesis genes. In Anaeromyxobacter sp. (strain Fw109-5), this protein is Arginine repressor.